Here is a 132-residue protein sequence, read N- to C-terminus: ATP synthase epsilon chain (132 aa).

Belongs to the ATPase epsilon chain family. F-type ATPases have 2 components, CF(1) - the catalytic core - and CF(0) - the membrane proton channel. CF(1) has five subunits: alpha(3), beta(3), gamma(1), delta(1), epsilon(1). CF(0) has three main subunits: a, b and c.

The protein resides in the cell membrane. Its function is as follows. Produces ATP from ADP in the presence of a proton gradient across the membrane. This Geobacillus stearothermophilus (Bacillus stearothermophilus) protein is ATP synthase epsilon chain (atpC).